Consider the following 414-residue polypeptide: Glucose-1-phosphate adenylyltransferase (414 aa).

Alpha-D-glucose 1-phosphate is bound by residues Gly-164, 184–185, and Ser-204; that span reads EK.

Belongs to the bacterial/plant glucose-1-phosphate adenylyltransferase family. As to quaternary structure, homotetramer.

The catalysed reaction is alpha-D-glucose 1-phosphate + ATP + H(+) = ADP-alpha-D-glucose + diphosphate. It participates in glycan biosynthesis; glycogen biosynthesis. Involved in the biosynthesis of ADP-glucose, a building block required for the elongation reactions to produce glycogen. Catalyzes the reaction between ATP and alpha-D-glucose 1-phosphate (G1P) to produce pyrophosphate and ADP-Glc. This chain is Glucose-1-phosphate adenylyltransferase, found in Acidothermus cellulolyticus (strain ATCC 43068 / DSM 8971 / 11B).